The following is a 1129-amino-acid chain: Stress response protein nst1 (1129 aa).

Disordered stretches follow at residues Met1–Thr136, Asn229–Ala307, Asn361–Met413, Met453–Asp879, and Asn903–Ser937. The segment covering Ala14–Pro54 has biased composition (polar residues). Residues Ser72–Pro85 show a composition bias toward basic and acidic residues. The span at Ser89 to Arg101 shows a compositional bias: basic residues. Composition is skewed to polar residues over residues Gly103–Met122 and Gly254–Phe263. 2 stretches are compositionally biased toward acidic residues: residues Thr274 to Glu304 and Asp379 to Thr408. Residues Ala441–Thr608 adopt a coiled-coil conformation. Composition is skewed to basic and acidic residues over residues Met453 to Arg473 and Gln482 to Arg613. Positions Leu626–Gln673 are enriched in low complexity. Residues Ala674–Pro685 are compositionally biased toward polar residues. The segment covering Ser687–Ser701 has biased composition (low complexity). The segment covering Thr718–Arg728 has biased composition (polar residues). A compositionally biased stretch (pro residues) spans Ser741–Pro754. Residues Thr865–Ala875 show a composition bias toward polar residues.

This sequence belongs to the NST1 family.

It localises to the cytoplasm. Its function is as follows. May act as a negative regulator of salt tolerance. This Aspergillus terreus (strain NIH 2624 / FGSC A1156) protein is Stress response protein nst1 (nst1).